We begin with the raw amino-acid sequence, 248 residues long: ATP synthase subunit a, chloroplastic (248 aa).

The next 4 helical transmembrane spans lie at 96-116 (VPFI…GALL), 135-155 (INTT…AGLY), 200-220 (LVVA…MMLL), and 221-241 (GLFT…AYIG).

This sequence belongs to the ATPase A chain family. As to quaternary structure, F-type ATPases have 2 components, CF(1) - the catalytic core - and CF(0) - the membrane proton channel. CF(1) has five subunits: alpha(3), beta(3), gamma(1), delta(1), epsilon(1). CF(0) has four main subunits: a, b, b' and c.

It is found in the plastid. It localises to the chloroplast thylakoid membrane. Functionally, key component of the proton channel; it plays a direct role in the translocation of protons across the membrane. This chain is ATP synthase subunit a, chloroplastic, found in Adiantum capillus-veneris (Maidenhair fern).